A 474-amino-acid polypeptide reads, in one-letter code: Adenosylhomocysteinase (474 aa).

Substrate-binding residues include Thr53, Asp135, and Glu197. Residue 198-200 participates in NAD(+) binding; it reads TTT. Positions 227 and 231 each coordinate substrate. NAD(+) contacts are provided by residues Asn232, 261-266, Glu284, Asn319, 340-342, and Asn388; these read GYGDVG and IGH.

It belongs to the adenosylhomocysteinase family. Requires NAD(+) as cofactor.

Its subcellular location is the cytoplasm. It carries out the reaction S-adenosyl-L-homocysteine + H2O = L-homocysteine + adenosine. The protein operates within amino-acid biosynthesis; L-homocysteine biosynthesis; L-homocysteine from S-adenosyl-L-homocysteine: step 1/1. May play a key role in the regulation of the intracellular concentration of adenosylhomocysteine. This chain is Adenosylhomocysteinase, found in Corynebacterium glutamicum (strain ATCC 13032 / DSM 20300 / JCM 1318 / BCRC 11384 / CCUG 27702 / LMG 3730 / NBRC 12168 / NCIMB 10025 / NRRL B-2784 / 534).